We begin with the raw amino-acid sequence, 379 residues long: Queuine tRNA-ribosyltransferase (379 aa).

Asp-94 serves as the catalytic Proton acceptor. Residues Asp-94 to Phe-98, Asp-148, Gln-191, and Gly-218 each bind substrate. Residues Gly-249–Ala-255 are RNA binding. Catalysis depends on Asp-268, which acts as the Nucleophile. Residues Thr-273–Arg-277 form an RNA binding; important for wobble base 34 recognition region. The Zn(2+) site is built by Cys-306, Cys-308, Cys-311, and His-337.

It belongs to the queuine tRNA-ribosyltransferase family. In terms of assembly, homodimer. Within each dimer, one monomer is responsible for RNA recognition and catalysis, while the other monomer binds to the replacement base PreQ1. Zn(2+) serves as cofactor.

The enzyme catalyses 7-aminomethyl-7-carbaguanine + guanosine(34) in tRNA = 7-aminomethyl-7-carbaguanosine(34) in tRNA + guanine. The protein operates within tRNA modification; tRNA-queuosine biosynthesis. Catalyzes the base-exchange of a guanine (G) residue with the queuine precursor 7-aminomethyl-7-deazaguanine (PreQ1) at position 34 (anticodon wobble position) in tRNAs with GU(N) anticodons (tRNA-Asp, -Asn, -His and -Tyr). Catalysis occurs through a double-displacement mechanism. The nucleophile active site attacks the C1' of nucleotide 34 to detach the guanine base from the RNA, forming a covalent enzyme-RNA intermediate. The proton acceptor active site deprotonates the incoming PreQ1, allowing a nucleophilic attack on the C1' of the ribose to form the product. After dissociation, two additional enzymatic reactions on the tRNA convert PreQ1 to queuine (Q), resulting in the hypermodified nucleoside queuosine (7-(((4,5-cis-dihydroxy-2-cyclopenten-1-yl)amino)methyl)-7-deazaguanosine). This Staphylococcus aureus (strain Mu3 / ATCC 700698) protein is Queuine tRNA-ribosyltransferase.